The chain runs to 504 residues: Maturase K (504 aa).

It belongs to the intron maturase 2 family. MatK subfamily.

It localises to the plastid. The protein resides in the chloroplast. Its function is as follows. Usually encoded in the trnK tRNA gene intron. Probably assists in splicing its own and other chloroplast group II introns. This chain is Maturase K, found in Matthiola incana (Common stock).